Reading from the N-terminus, the 343-residue chain is S-adenosylmethionine:tRNA ribosyltransferase-isomerase (343 aa).

It belongs to the QueA family. Monomer.

It is found in the cytoplasm. It carries out the reaction 7-aminomethyl-7-carbaguanosine(34) in tRNA + S-adenosyl-L-methionine = epoxyqueuosine(34) in tRNA + adenine + L-methionine + 2 H(+). Its pathway is tRNA modification; tRNA-queuosine biosynthesis. Transfers and isomerizes the ribose moiety from AdoMet to the 7-aminomethyl group of 7-deazaguanine (preQ1-tRNA) to give epoxyqueuosine (oQ-tRNA). The polypeptide is S-adenosylmethionine:tRNA ribosyltransferase-isomerase (Hydrogenobaculum sp. (strain Y04AAS1)).